The following is a 231-amino-acid chain: Uracil-DNA glycosylase (231 aa).

The active-site Proton acceptor is Asp-74.

It belongs to the uracil-DNA glycosylase (UDG) superfamily. UNG family.

It localises to the cytoplasm. The enzyme catalyses Hydrolyzes single-stranded DNA or mismatched double-stranded DNA and polynucleotides, releasing free uracil.. In terms of biological role, excises uracil residues from the DNA which can arise as a result of misincorporation of dUMP residues by DNA polymerase or due to deamination of cytosine. This is Uracil-DNA glycosylase from Campylobacter jejuni subsp. jejuni serotype O:2 (strain ATCC 700819 / NCTC 11168).